The chain runs to 582 residues: Threonine--tRNA ligase (582 aa).

Positions 185-478 are catalytic; the sequence is DHRKLGKELE…LTEQYGGAFP (294 aa). Residues Cys278, His329, and His455 each contribute to the Zn(2+) site.

This sequence belongs to the class-II aminoacyl-tRNA synthetase family. In terms of assembly, homodimer. Zn(2+) is required as a cofactor.

The protein resides in the cytoplasm. It catalyses the reaction tRNA(Thr) + L-threonine + ATP = L-threonyl-tRNA(Thr) + AMP + diphosphate + H(+). In terms of biological role, catalyzes the attachment of threonine to tRNA(Thr) in a two-step reaction: L-threonine is first activated by ATP to form Thr-AMP and then transferred to the acceptor end of tRNA(Thr). Also edits incorrectly charged L-seryl-tRNA(Thr). This Dehalococcoides mccartyi (strain ATCC BAA-2266 / KCTC 15142 / 195) (Dehalococcoides ethenogenes (strain 195)) protein is Threonine--tRNA ligase.